The sequence spans 2296 residues: Protein Ycf2 (2296 aa).

Residue 1650–1657 (GSIGIGRS) coordinates ATP.

This sequence belongs to the Ycf2 family.

It localises to the plastid. The protein resides in the chloroplast stroma. Its function is as follows. Probable ATPase of unknown function. Its presence in a non-photosynthetic plant (Epifagus virginiana) and experiments in tobacco indicate that it has an essential function which is probably not related to photosynthesis. This chain is Protein Ycf2, found in Arabis hirsuta (Hairy rock-cress).